A 248-amino-acid polypeptide reads, in one-letter code: Tyrosine recombinase XerD-like (248 aa).

In terms of domain architecture, Core-binding (CB) spans 1-72 (MKSYIEPFIA…TANQFLYYLY (72 aa)). Positions 85-248 (DTMKVMRTEK…PVTLEKYYKS (164 aa)) constitute a Tyr recombinase domain. Residues Lys149 and Arg213 contribute to the active site. The active-site O-(3'-phospho-DNA)-tyrosine intermediate is the Tyr245.

The protein belongs to the 'phage' integrase family. XerD-like subfamily.

It localises to the cytoplasm. In terms of biological role, putative tyrosine recombinase. Not involved in the cutting and rejoining of the recombining DNA molecules on dif(SL) site. This chain is Tyrosine recombinase XerD-like, found in Streptococcus pyogenes serotype M3 (strain ATCC BAA-595 / MGAS315).